A 149-amino-acid chain; its full sequence is HTH-type transcriptional regulator LrpB (149 aa).

The HTH asnC-type domain maps to 3 to 64; the sequence is IDSIDFQILQ…VVDELKMGFS (62 aa). The H-T-H motif DNA-binding region spans 22 to 41; the sequence is WKEIGEKIHMTGQAVGNRIK.

Functionally, negative regulation of glyA transcription and kinB-dependent sporulation. This chain is HTH-type transcriptional regulator LrpB (lrpB), found in Bacillus subtilis (strain 168).